Here is a 450-residue protein sequence, read N- to C-terminus: Molybdate-anion transporter (450 aa).

Helical transmembrane passes span 1–21 (MLVT…GLEL), 43–63 (LDFY…APYL), 79–99 (ILYV…SSLV), 128–148 (FVLL…FSAF), 176–196 (FWNH…ACWM), 198–218 (LGPV…GALA), 249–269 (VLLL…FVFL), 278–298 (GAPL…GSSL), 311–331 (PMHL…MLTF), 344–364 (FIAF…MSFL), 376–396 (GVLN…LLVL), and 409–429 (FSIC…LFTV).

This sequence belongs to the major facilitator superfamily.

The protein localises to the cell membrane. Its function is as follows. Mediates high-affinity intracellular uptake of the rare oligo-element molybdenum. The chain is Molybdate-anion transporter (MFSD5) from Bos taurus (Bovine).